Consider the following 780-residue polypeptide: Nuclear cap-binding protein subunit 1 (780 aa).

A disordered region spans residues 1 to 25 (MSSYRGSTRPRKRTREGENYGFRPH). Ser29 carries the phosphoserine modification. Residues 34-249 (AARIKKDITF…KQLILSREND (216 aa)) form the MIF4G domain. Positions 738–780 (ANEPVQENTSEEQEDTKMQPVDAVDEQPSENNQTAADATNEEK) are disordered.

This sequence belongs to the NCBP1 family. In terms of assembly, component of the nuclear cap-binding complex (CBC), a heterodimer composed of cbc1 and cbc2 that interacts with capped RNAs.

It localises to the cytoplasm. The protein resides in the perinuclear region. The protein localises to the nucleus. In terms of biological role, component of the CBC complex, which binds cotranscriptionally to the 5'-cap of pre-mRNAs and is involved in maturation, export and degradation of nuclear mRNAs. The chain is Nuclear cap-binding protein subunit 1 (cbc1) from Schizosaccharomyces pombe (strain 972 / ATCC 24843) (Fission yeast).